Here is a 683-residue protein sequence, read N- to C-terminus: DNA ligase (683 aa).

Residues 43–47, 92–93, and Glu-125 contribute to the NAD(+) site; these read DAEYD and SL. Lys-127 acts as the N6-AMP-lysine intermediate in catalysis. Positions 148, 185, 303, and 327 each coordinate NAD(+). 4 residues coordinate Zn(2+): Cys-421, Cys-424, Cys-439, and Cys-445. Residues 604–683 form the BRCT domain; the sequence is IADNPLKGKN…QEFIALTGEN (80 aa).

The protein belongs to the NAD-dependent DNA ligase family. LigA subfamily. It depends on Mg(2+) as a cofactor. Requires Mn(2+) as cofactor.

The enzyme catalyses NAD(+) + (deoxyribonucleotide)n-3'-hydroxyl + 5'-phospho-(deoxyribonucleotide)m = (deoxyribonucleotide)n+m + AMP + beta-nicotinamide D-nucleotide.. In terms of biological role, DNA ligase that catalyzes the formation of phosphodiester linkages between 5'-phosphoryl and 3'-hydroxyl groups in double-stranded DNA using NAD as a coenzyme and as the energy source for the reaction. It is essential for DNA replication and repair of damaged DNA. This is DNA ligase from Actinobacillus pleuropneumoniae serotype 5b (strain L20).